The primary structure comprises 1165 residues: Linoleate diol synthase (1165 aa).

The segment at 104-448 (TDGLINDLWD…DGAFDDTELV (345 aa)) is fatty acid alpha-dioxygenase. Position 203 (His203) interacts with heme b. Positions 204, 219, 221, 223, and 225 each coordinate Ca(2+). Tyr376 is an active-site residue. His379 contacts heme b. The interval 666-1161 (EVLSNQKDYK…ATTMKINWEG (496 aa)) is epoxy alcohol synthase. A heme-binding site is contributed by Cys1080. The tract at residues 1114 to 1134 (RSYPASQWPGQAGRPPRDPAW) is disordered.

The protein belongs to the peroxidase family. Homotetramer. Heme b serves as cofactor. Ca(2+) is required as a cofactor. The cofactor is heme. The N-terminus is blocked.

It catalyses the reaction (9Z,12Z)-octadecadienoate + O2 = (8R,9Z,12Z)-8-hydroperoxyoctadeca-9,12-dienoate. The catalysed reaction is (8R,9Z,12Z)-8-hydroperoxyoctadeca-9,12-dienoate = (7S,8S,9Z,12Z)-7,8-dihydroxyoctadeca-9,12-dienoate. 7,8-linoleate diol synthase is a bifunctional enzyme that converts linoleic acid (18:2n-6) into 8-hydroperoxy-8(E),12(Z)-octadecadienoic acid (8-HPODE) and then catalyzes the isomerization of the resulting hydroperoxide to 7,8-dihydroxy-9(Z),12(Z)-octadecadienoic acid (7,8-DiHODE). This Gaeumannomyces graminis (Turf grass take-all root rot fungus) protein is Linoleate diol synthase.